Here is a 532-residue protein sequence, read N- to C-terminus: Phosphoenolpyruvate carboxykinase (ATP) (532 aa).

Residues Arg-60, Tyr-194, and Lys-200 each contribute to the substrate site. Residues Lys-200, His-219, and 237 to 245 (GLSGTGKTT) each bind ATP. Mn(2+)-binding residues include Lys-200 and His-219. Residue Asp-258 coordinates Mn(2+). ATP-binding residues include Glu-286, Arg-324, and Thr-449. Position 324 (Arg-324) interacts with substrate.

It belongs to the phosphoenolpyruvate carboxykinase (ATP) family. Mn(2+) serves as cofactor.

Its subcellular location is the cytoplasm. It catalyses the reaction oxaloacetate + ATP = phosphoenolpyruvate + ADP + CO2. Its pathway is carbohydrate biosynthesis; gluconeogenesis. Functionally, involved in the gluconeogenesis. Catalyzes the conversion of oxaloacetate (OAA) to phosphoenolpyruvate (PEP) through direct phosphoryl transfer between the nucleoside triphosphate and OAA. This chain is Phosphoenolpyruvate carboxykinase (ATP), found in Ruegeria pomeroyi (strain ATCC 700808 / DSM 15171 / DSS-3) (Silicibacter pomeroyi).